The following is a 126-amino-acid chain: C-type natriuretic peptide 2 (126 aa).

The N-terminal stretch at 1 to 22 (MAVCSSSSLILLTVFLSVAVET) is a signal peptide. A propeptide spanning residues 23-102 (RPSSDRDEEQ…REKTRRWGRK (80 aa)) is cleaved from the precursor. The tract at residues 44–80 (SLILAPPTSNDSTEGSSGSPEPPTPSEAPVLIHGDRG) is disordered. The cysteines at positions 110 and 126 are disulfide-linked.

This sequence belongs to the natriuretic peptide family. Brain and spinal cord.

The protein localises to the secreted. Functionally, exhibits natriuretic and vasodepressant activity. Has cGMP-stimulating activity. May help to regulate body fluid homeostasis in a variety of aquatic environments. The chain is C-type natriuretic peptide 2 from Oryzias latipes (Japanese rice fish).